We begin with the raw amino-acid sequence, 469 residues long: MDVENEQILNVNPADPDNLSDSLFSGDEESAGTEEIKNEINGNWISASSINEARINAKAKRRLRKNSSRDSGRGDSVSDNGSDTLRSGVTVPTSPKGRLLDRRSRSGKGRGLPKKGGAGGKGVWGTPGQVYDVEEVDVKDPNYDDDQENCVYETVVLPLDERAFEKTLTPIIQEYFEHGDTNEVAEMLRDLNLGEMKSGVPVLAVSLALEGKASHREMTSKLLSDLCGTVMSTSDVEKSFDKSLKDLPELALDTPRAPQLVGQFIARAVGDGILCNTYIDSYKGTVDCVQARAALDKATVLLSMSKGGKRKDSVWGSGGGQQSVNHLVKEIDMLLKEYLLSGDISEAEHCLKELEVPHFHHELVYEAIIMVLESTGESTFKMILDLLKSLWKSSTITVDQMKRGYERIYNEIPDINLDVPHSYSVLERFVEECFQAGIISKQLRDLCPSRGRKRFVSEGDGGRLKPESY.

N-acetylmethionine is present on M1. 2 disordered regions span residues 1 to 38 (MDVE…EIKN) and 58 to 128 (KAKR…GTPG). S25 bears the Phosphoserine mark. Residues 58-64 (KAKRRLR) carry the Nuclear localization signal motif. S67 carries the phosphoserine; by PKB and RPS6KB1 modification. Phosphoserine is present on residues S68, S71, S76, and S78. The Phosphodegron signature appears at 70-76 (DSGRGDS). Positions 74-83 (GDSVSDNGSD) are enriched in low complexity. The span at 84-93 (TLRSGVTVPT) shows a compositional bias: polar residues. S94 is subject to Phosphoserine. Over residues 114 to 125 (KKGGAGGKGVWG) the composition is skewed to gly residues. Residue Y152 is modified to Phosphotyrosine. The region spanning 163 to 284 (AFEKTLTPII…CNTYIDSYKG (122 aa)) is the MI 1 domain. A phosphoserine mark is found at S313 and S317. Residues 326 to 449 (HLVKEIDMLL…SKQLRDLCPS (124 aa)) enclose the MI 2 domain. The Nuclear localization signal signature appears at 448–454 (PSRGRKR). The residue at position 457 (S457) is a Phosphoserine; by PKB.

It belongs to the PDCD4 family. Interacts (via MI domains) with EIF4A2. Interacts (via MI domains) with EIF4A1 (via N-terminal domain). Heterotrimer with EIF4A1; one molecule of PDCD4 binds two molecules of EIF4A1. Interacts with EIF4G1. May form a complex with EIF4A1 and EIF4G1. The interaction between PDCD4 and EIF4A1 interferes with the interaction between EIF4A1 and EIF4G. When phosphorylated, interacts with BTRC and FBXW11. Post-translationally, polyubiquitinated, leading to its proteasomal degradation. Rapidly degraded in response to mitogens. Phosphorylation of the phosphodegron promotes interaction with BTRC and proteasomal degradation. Phosphorylated at Ser-67 by RPS6KB1 in response to mitogens; phosphorylation promotes proteasomal degradation of PDCD4.

Its subcellular location is the nucleus. It localises to the cytoplasm. Inhibits translation initiation and cap-dependent translation. May excert its function by hindering the interaction between EIF4A1 and EIF4G. Inhibits the helicase activity of EIF4A. Modulates the activation of JUN kinase. Down-regulates the expression of MAP4K1, thus inhibiting events important in driving invasion, namely, MAPK85 activation and consequent JUN-dependent transcription. May play a role in apoptosis. Tumor suppressor. Inhibits tumor promoter-induced neoplastic transformation. Binds RNA. This Pongo abelii (Sumatran orangutan) protein is Programmed cell death protein 4 (PDCD4).